Here is a 179-residue protein sequence, read N- to C-terminus: Inner membrane-spanning protein YciB (179 aa).

5 helical membrane-spanning segments follow: residues 22–42 (IYAA…YSWV), 50–70 (MALI…FFHN), 76–96 (WKVT…QWVM), 121–141 (LAWA…AFWL), and 149–169 (FKVF…GIYI).

The protein belongs to the YciB family.

It localises to the cell inner membrane. Plays a role in cell envelope biogenesis, maintenance of cell envelope integrity and membrane homeostasis. This chain is Inner membrane-spanning protein YciB, found in Shigella boydii serotype 4 (strain Sb227).